We begin with the raw amino-acid sequence, 340 residues long: Phosphate acyltransferase (340 aa).

It belongs to the PlsX family. In terms of assembly, homodimer. Probably interacts with PlsY.

It is found in the cytoplasm. It carries out the reaction a fatty acyl-[ACP] + phosphate = an acyl phosphate + holo-[ACP]. The protein operates within lipid metabolism; phospholipid metabolism. In terms of biological role, catalyzes the reversible formation of acyl-phosphate (acyl-PO(4)) from acyl-[acyl-carrier-protein] (acyl-ACP). This enzyme utilizes acyl-ACP as fatty acyl donor, but not acyl-CoA. The chain is Phosphate acyltransferase from Leptospira biflexa serovar Patoc (strain Patoc 1 / ATCC 23582 / Paris).